Here is a 248-residue protein sequence, read N- to C-terminus: mRNA-decapping protein OPG122 (248 aa).

The Nudix hydrolase domain maps to 45 to 227 (HKRVSVSAIL…IAKYALDTAK (183 aa)). The Nudix box motif lies at 125 to 147 (GGILKRGENVPECLSREIKEEVN). Glu-132 contacts Mg(2+). Glu-141 serves as the catalytic Nucleophile. A Mn(2+)-binding site is contributed by Glu-145. Asp-167 is a Mg(2+) binding site.

The protein belongs to the Nudix hydrolase family. It depends on Mg(2+) as a cofactor. Mn(2+) is required as a cofactor.

The protein resides in the host mitochondrion. Decapping enzyme that remove the protective 5'-cap from both host and viral mRNAs to commit transcripts for decay by the cellular exonuclease XRN1. Preferentially targets spliced mRNAs and since all viral genes are intronless, it preferentially targets host over viral transcripts. Acceleration of the turnover of cellular transcripts promotes the shutoff of host protein synthesis and therefore diminish the magnitude of antiviral response. This is mRNA-decapping protein OPG122 (OPG122) from Variola virus (isolate Human/India/Ind3/1967) (VARV).